Reading from the N-terminus, the 402-residue chain is Protein FixF (402 aa).

This chain is Protein FixF (fixF), found in Sinorhizobium fredii (strain NBRC 101917 / NGR234).